A 345-amino-acid chain; its full sequence is MHSKNNTILKMIKGEEVTHTPVWFMRQAGRSQPEYRALKEKYSLFEITHQPELCAYVTHLPVDNYQTDAAILYKDIMTPLKPIGVDVEIKSGIGPVISNTIKTVQDVEKLGQIDPKRDVPYVLDTIKLLTEEKLNVPLIGFVGAPFTLASYMIEGGPSKNYHFTKAMMFRDEATWFALMDHLVDMSITYASAQIEAGAELIQIFDSWIGALNAVDFNYYIKPSMERLIKGIKAQHDVPIILFGVNATHLIEEWNNLPIDVLGIDWRTTIKETSDSGVAKTIQGNLDPSLLLAPWDVIQPRLDKILDEGMQHGKHIFNLGHGVFPEVNPDTLKQITAYVHDYTKRK.

Residues 26-30 (RQAGR), Phe-45, Asp-75, Tyr-151, Ser-206, and His-320 contribute to the substrate site.

Belongs to the uroporphyrinogen decarboxylase family. Homodimer.

It localises to the cytoplasm. It carries out the reaction uroporphyrinogen III + 4 H(+) = coproporphyrinogen III + 4 CO2. Its pathway is porphyrin-containing compound metabolism; protoporphyrin-IX biosynthesis; coproporphyrinogen-III from 5-aminolevulinate: step 4/4. Functionally, catalyzes the decarboxylation of four acetate groups of uroporphyrinogen-III to yield coproporphyrinogen-III. This is Uroporphyrinogen decarboxylase from Staphylococcus carnosus (strain TM300).